A 249-amino-acid chain; its full sequence is MALTDLSAKVVLVDIEGTTTSITFVHDVLFPYAKANAGQYLSETWETDDTKQIVEELTQLPQYTEYASTLETRPEINAAHIADFSRYLIEKDLKVTPLKTLQGHIWAKGYASGELKGHVYEDVAVAFQAWSDAGLRIAVYSSGSVAAQKLIFQHSIAGDLLPLLSAHFDTNVGHKQQTESYTRIAESLGVEPQHVLFLTDVPEEASAARDAGMQTVLLARPGNAPLTAEHTSAFPVVANFVALQSLKQP.

2 residues coordinate Mg(2+): Asp14 and Glu16. Substrate is bound by residues 141-142 (SS) and Lys175. Asp200 contacts Mg(2+).

It belongs to the HAD-like hydrolase superfamily. MasA/MtnC family. In terms of assembly, monomer. The cofactor is Mg(2+).

The protein localises to the cytoplasm. It localises to the nucleus. The catalysed reaction is 5-methylsulfanyl-2,3-dioxopentyl phosphate + H2O = 1,2-dihydroxy-5-(methylsulfanyl)pent-1-en-3-one + phosphate. It participates in amino-acid biosynthesis; L-methionine biosynthesis via salvage pathway; L-methionine from S-methyl-5-thio-alpha-D-ribose 1-phosphate: step 3/6. The protein operates within amino-acid biosynthesis; L-methionine biosynthesis via salvage pathway; L-methionine from S-methyl-5-thio-alpha-D-ribose 1-phosphate: step 4/6. Bifunctional enzyme that catalyzes the enolization of 2,3-diketo-5-methylthiopentyl-1-phosphate (DK-MTP-1-P) into the intermediate 2-hydroxy-3-keto-5-methylthiopentenyl-1-phosphate (HK-MTPenyl-1-P), which is then dephosphorylated to form the acireductone 1,2-dihydroxy-3-keto-5-methylthiopentene (DHK-MTPene). The protein is Enolase-phosphatase E1 of Drosophila mojavensis (Fruit fly).